The primary structure comprises 384 residues: 8-amino-7-oxononanoate synthase (384 aa).

Arg-21 is a binding site for substrate. 108-109 contacts pyridoxal 5'-phosphate; that stretch reads GF. His-133 is a substrate binding site. Pyridoxal 5'-phosphate is bound by residues Ser-179, His-207, and Thr-233. Position 236 is an N6-(pyridoxal phosphate)lysine (Lys-236). Thr-352 is a substrate binding site.

It belongs to the class-II pyridoxal-phosphate-dependent aminotransferase family. BioF subfamily. In terms of assembly, homodimer. Pyridoxal 5'-phosphate serves as cofactor.

The enzyme catalyses 6-carboxyhexanoyl-[ACP] + L-alanine + H(+) = (8S)-8-amino-7-oxononanoate + holo-[ACP] + CO2. Its pathway is cofactor biosynthesis; biotin biosynthesis. In terms of biological role, catalyzes the decarboxylative condensation of pimeloyl-[acyl-carrier protein] and L-alanine to produce 8-amino-7-oxononanoate (AON), [acyl-carrier protein], and carbon dioxide. This is 8-amino-7-oxononanoate synthase from Enterobacter sp. (strain 638).